Reading from the N-terminus, the 354-residue chain is Fusarinine C esterase sidJ (354 aa).

The protein belongs to the sidJ hydrolase family. As to quaternary structure, homodimer.

It catalyses the reaction fusarinine C + 3 H2O = 3 fusarinine + Fe(3+). In terms of biological role, displays specific fusarinine C (FsC) esterase activity but does not hydrolyze triacetylfusarinine C (TAFC), which has the same core structure as fusarinine C. Both extra- and intracellular siderophores have been shown to be crucial for the virulence. Subsequent to chelation of iron and uptake, FsC and TAFC are hydrolyzed and the iron is transferred to the metabolism or to the intracellular siderophore ferricrocin (FC) for transport and storage of iron. This is Fusarinine C esterase sidJ from Aspergillus fumigatus (strain ATCC MYA-4609 / CBS 101355 / FGSC A1100 / Af293) (Neosartorya fumigata).